The following is a 77-amino-acid chain: MKAFIVILSIAIVLLLIVSIKETSAKDCKQECVKRYTKGDLTNFLKAEYEPKNRGGICYCEFTCHVKFYIYLKHEMD.

The N-terminal stretch at 1–25 (MKAFIVILSIAIVLLLIVSIKETSA) is a signal peptide. Positions 26-46 (KDCKQECVKRYTKGDLTNFLK) are excised as a propeptide.

Belongs to the scolopendra neurotoxin 3 family. Post-translationally, contains 2 disulfide bonds. Expressed by the venom gland.

The protein resides in the secreted. The protein is Putative neurotoxin 1 of Scolopendra subspinipes (Vietnamese centipede).